The following is a 113-amino-acid chain: Outer membrane protein assembly factor BamE (113 aa).

The first 19 residues, 1–19 (MRCKTLTAAAAVLLMLTAG), serve as a signal peptide directing secretion. Cys-20 is lipidated: N-palmitoyl cysteine. Cys-20 carries the S-diacylglycerol cysteine lipid modification.

This sequence belongs to the BamE family. As to quaternary structure, part of the Bam complex, which is composed of the outer membrane protein BamA, and four lipoproteins BamB, BamC, BamD and BamE.

Its subcellular location is the cell outer membrane. In terms of biological role, part of the outer membrane protein assembly complex, which is involved in assembly and insertion of beta-barrel proteins into the outer membrane. This chain is Outer membrane protein assembly factor BamE, found in Escherichia coli O6:H1 (strain CFT073 / ATCC 700928 / UPEC).